The chain runs to 2947 residues: 3'-5' exoribonuclease HELZ2 (2947 aa).

The segment at 85-114 adopts a C3H1-type 1 zinc-finger fold; the sequence is PMRYQVCHYYRPGLGCRRHWNRCTFARSPE. The C2H2-type zinc finger occupies 167 to 187; sequence CFTCCPPCLCPVDPRGHCPKH. The C3H1-type 2 zinc-finger motif lies at 221–245; the sequence is YCMYVGRGVPCRHGASRCEYAHSAV. Residues 289–311 form a C2H2-type; atypical zinc finger; the sequence is CHACLVTCNSQEAFENHCSSLEH. The UvrD-like helicase ATP-binding domain maps to 769–1317; sequence VGLIAGRRPE…ELLDESQQVT (549 aa). 790 to 797 lines the ATP pocket; it reads GPFGTGKT. The interaction with THRAP3 stretch occupies residues 809 to 1290; sequence QQPHTKVLIC…GGMSEEDSES (482 aa). The DEAA box signature appears at 913-916; it reads DEAA. The disordered stretch occupies residues 1260 to 1292; the sequence is EDTASGNSASRDAAAEVSTLEGGMSEEDSESDF. Short sequence motifs (LXXLL motif) lie at residues 1306-1310, 1348-1352, 1403-1407, and 2240-2244; these read LKELL, LWKFL, LVQIL, and LEGLP. The residue at position 2381 (R2381) is an Omega-N-methylarginine. An interaction with THRAP3 region spans residues 2413–2947; sequence PEPCRGNWPR…RVQRKSALSS (535 aa). The UvrD-like helicase ATP-binding 2 domain maps to 2449-2726; the sequence is LNQSQDRAVR…IMLDTQYRMH (278 aa). ATP is bound at residue 2470–2477; sequence GPPGTGKT. Positions 2525–2529 match the LXXLL motif 5 motif; sequence LGGLL.

It belongs to the DNA2/NAM7 helicase family. In terms of assembly, interacts with PPARA (via DNA-binding domain) and PPARG; the interaction stimulates the transcriptional activity of PPARA and PPARG. Interacts with THRAP3; the interaction is direct and HELZ2 and THRAP3 synergistically enhance the transcriptional activity of PPARG. It is probably part of the peroxisome proliferator activated receptor alpha interacting complex (PRIC).

It is found in the cytoplasm. It carries out the reaction Exonucleolytic cleavage in the 3'- to 5'-direction to yield nucleoside 5'-phosphates.. The catalysed reaction is ATP + H2O = ADP + phosphate + H(+). Can degrade highly structured RNAs through its concerted ATP-dependent RNA helicase and 3' to 5' exoribonuclease activities. Shows a strong preference for pyrimidine over purine residues for its nuclease activity. Acts as a transcriptional coactivator for a number of nuclear receptors including PPARA, PPARG, THRA, THRB and RXRA. The chain is 3'-5' exoribonuclease HELZ2 (Helz2) from Mus musculus (Mouse).